The primary structure comprises 250 residues: Probable replication-associated protein repA2 (250 aa).

It belongs to the IncFII RepA family.

In terms of biological role, this protein is essential for plasmid replication; it is involved in copy control functions. The chain is Probable replication-associated protein repA2 (repA2) from Buchnera aphidicola subsp. Acyrthosiphon pisum (strain APS) (Acyrthosiphon pisum symbiotic bacterium).